The following is a 499-amino-acid chain: Neuronal acetylcholine receptor subunit alpha-7 (499 aa).

The signal sequence occupies residues 1-19; it reads MRGSLCLALAASILHVSLQ. Over 20–230 the chain is Extracellular; that stretch reads GEFQRKLYKD…VSIRRRTLYY (211 aa). Residues arginine 39 and valine 41 each coordinate Ca(2+). 3 N-linked (GlcNAc...) asparagine glycosylation sites follow: asparagine 43, asparagine 87, and asparagine 130. A disulfide bridge links cysteine 147 with cysteine 161. Ca(2+) contacts are provided by serine 169 and tyrosine 207. A disulfide bridge links cysteine 209 with cysteine 210. A run of 3 helical transmembrane segments spans residues 231–251, 259–279, and 292–312; these read GLNL…VFLL, ISLG…VAEI, and QYFA…VIVL. Positions 257–264 are essential for TMEM35A/NACHO-mediated proper subunit assembly and trafficking to cell membrane; it reads EKISLGIT. Residues 313 to 466 are Cytoplasmic-facing; that stretch reads QYHHHDPDGG…WKFAACVVDR (154 aa). A helical membrane pass occupies residues 467–487; that stretch reads LCLMAFSVFTILCTIGILMSA.

This sequence belongs to the ligand-gated ion channel (TC 1.A.9) family. Acetylcholine receptor (TC 1.A.9.1) subfamily. Alpha-7/CHRNA7 sub-subfamily. As to quaternary structure, homopentamer. Homooligomer of the short form gives rise to unfunctional channels, as does coexpression of both long and short forms of the receptor. Can also form heteropentamers with CHRNB2, mainly found in basal forebrain cholinergic neurons. Interacts with RIC3; which is required for proper folding and assembly. Interacts with LYPD6. Interacts with CANX. Glycosylations at Asn-43, Asn-87 and Asn-130 are essential for TMEM35A/NACHO-mediated proper subunit assembly and trafficking to the cell membrane. In terms of tissue distribution, at least in chromaffin cells.

It localises to the postsynaptic cell membrane. The protein localises to the cell membrane. It catalyses the reaction Ca(2+)(in) = Ca(2+)(out). It carries out the reaction K(+)(in) = K(+)(out). The enzyme catalyses Na(+)(in) = Na(+)(out). The catalysed reaction is choline(out) = choline(in). It catalyses the reaction NH4(+)(in) = NH4(+)(out). It carries out the reaction L-arginine(in) = L-arginine(out). The enzyme catalyses guanidine(out) = guanidine(in). Its activity is regulated as follows. Activated by a myriad of ligands such as acetylcholine, cytisine, nicotine, choline and epibatidine. Oligomeric amyloid-beta protein 42 activates specifially CHRNA7:CHRNB2 nAchRs. Activity is modulated by positive allosteric modulators (PAMs), such as flavonoids, with a wide range of chemical diversity, pharmacological sensitivity and efficacy. AChR activity is inhibited by the antagonists alpha-conotoxons RgIA, ImI and ImII, small disulfide-constrained peptides from cone snails. Alpha-conotoxin PnIC selectively inhibits CHRNA7:CHRNB2 over CHRNA7 homopentamer. Its function is as follows. Component of neuronal acetylcholine receptors (nAChRs) that function as pentameric, ligand-gated cation channels with high calcium permeability among other activities. nAChRs are excitatory neurotrasnmitter receptors formed by a collection of nAChR subunits known to mediate synaptic transmission in the nervous system and the neuromuscular junction. Each nAchR subunit confers differential attributes to channel properties, including activation, deactivation and desensitization kinetics, pH sensitivity, cation permeability, and binding to allosteric modulators. CHRNA7 forms homopentameric neuronal acetylcholine receptors abundantly expressed in the central nervous system, characterized by fast desensitization and high calcium permeability. Also forms heteropentamers with CHRNB2, mainly expressed in basal forebrain cholinergic neurons. Involved in the modulation of calcium-dependent signaling pathways and influences the release of neurotransmitters, including dopamine, glutamate and GABA. Also expressed in non-neuronal cells such as immune cells like lymphocytes, monocytes and macrophages. In T cells, activation induces metabotropic signaling that results in an increase of intracellular Ca2+ concentrations, independent of ionotropic receptor functions. In macrophages, required for acetylcholine-mediated inhibition of TNF and other inflammatory cytokine release. Once activated by acetylcholine, nicotine or other agonists, selectively inhibits production of pro-inflammatory cytokines while leaving anti-inflammatory cytokines undisturbed. Stimulates the cholinergic anti-inflammatory pathway, controlling inflammation by inhibiting NFKB nuclear translocation and activating the JAK2-STAT3 pathway, independently of ion channel activity. Also expressed in the urothelium where it modulates reflex bladder activity by increasing intracellular calcium through internal stores and decreasing basal ATP release. This chain is Neuronal acetylcholine receptor subunit alpha-7 (CHRNA7), found in Bos taurus (Bovine).